Here is a 339-residue protein sequence, read N- to C-terminus: uncharacterized protein (339 aa).

VOC domains are found at residues 2–127 (EFDY…VRSE) and 141–276 (TIDH…CLEI). Fe cation-binding residues include H144, H222, and E306.

The protein belongs to the 4HPPD family. Fe cation serves as cofactor.

This is an uncharacterized protein from Synechocystis sp. (strain ATCC 27184 / PCC 6803 / Kazusa).